We begin with the raw amino-acid sequence, 64 residues long: Prokaryotic ubiquitin-like protein Pup (64 aa).

Residues Gln-20–Phe-58 are ARC ATPase binding. Glu-64 participates in a covalent cross-link: Isoglutamyl lysine isopeptide (Glu-Lys) (interchain with K-? in acceptor proteins).

The protein belongs to the prokaryotic ubiquitin-like protein family. Strongly interacts with the proteasome-associated ATPase ARC through a hydrophobic interface; the interacting region of Pup lies in its C-terminal half. There is one Pup binding site per ARC hexamer ring.

Its pathway is protein degradation; proteasomal Pup-dependent pathway. Its function is as follows. Protein modifier that is covalently attached to lysine residues of substrate proteins, thereby targeting them for proteasomal degradation. The tagging system is termed pupylation. The chain is Prokaryotic ubiquitin-like protein Pup from Rothia mucilaginosa (strain DY-18) (Stomatococcus mucilaginosus).